The chain runs to 180 residues: Cell division protein ZapC (180 aa).

Belongs to the ZapC family. Interacts directly with FtsZ.

The protein resides in the cytoplasm. In terms of biological role, contributes to the efficiency of the cell division process by stabilizing the polymeric form of the cell division protein FtsZ. Acts by promoting interactions between FtsZ protofilaments and suppressing the GTPase activity of FtsZ. The polypeptide is Cell division protein ZapC (Vibrio cholerae serotype O1 (strain ATCC 39315 / El Tor Inaba N16961)).